A 651-amino-acid chain; its full sequence is LEAF RUST 10 DISEASE-RESISTANCE LOCUS RECEPTOR-LIKE PROTEIN KINASE-like 1.2 (651 aa).

Residues 1-26 (MNPSTPSLLYTSIFFYFTIIATQTLS) form the signal peptide. At 27 to 264 (LDPKFKACEP…NDKRRRVIVK (238 aa)) the chain is on the extracellular side. N-linked (GlcNAc...) asparagine glycans are attached at residues asparagine 88, asparagine 114, asparagine 130, asparagine 136, asparagine 155, asparagine 193, and asparagine 213. A helical transmembrane segment spans residues 265 to 285 (VLIGASAAVVGLIAASIFWYV). Topologically, residues 286 to 651 (YHRRKTKSYR…DSVIVKWDSK (366 aa)) are cytoplasmic. Positions 341 to 613 (FDPSKELGDG…PCMSHVQDTL (273 aa)) constitute a Protein kinase domain. ATP contacts are provided by residues 347 to 355 (LGDGGFGTV) and lysine 369. Phosphotyrosine is present on tyrosine 415. Aspartate 465 acts as the Proton acceptor in catalysis. Serine 498 is modified (phosphoserine). Residues threonine 499 and threonine 504 each carry the phosphothreonine modification. The residue at position 512 (tyrosine 512) is a Phosphotyrosine.

This sequence belongs to the protein kinase superfamily. Ser/Thr protein kinase family.

It is found in the cell membrane. The protein resides in the membrane. It carries out the reaction L-seryl-[protein] + ATP = O-phospho-L-seryl-[protein] + ADP + H(+). It catalyses the reaction L-threonyl-[protein] + ATP = O-phospho-L-threonyl-[protein] + ADP + H(+). In terms of biological role, probable receptor-like serine/threonine-protein kinase involved in abscisic acid (ABA) signaling. Acts as a positive regulator of abiotic stress response. This Arabidopsis thaliana (Mouse-ear cress) protein is LEAF RUST 10 DISEASE-RESISTANCE LOCUS RECEPTOR-LIKE PROTEIN KINASE-like 1.2.